A 404-amino-acid chain; its full sequence is p-hydroxybenzoate hydroxylase (404 aa).

Residues E35, 45-50 (RIRAGI), and Q105 contribute to the FAD site. Substrate contacts are provided by residues Y203, 214-216 (SMR), and Y224. D288 contributes to the FAD binding site. P295 is a substrate binding site. Residue 301-302 (LN) participates in FAD binding.

This sequence belongs to the aromatic-ring hydroxylase family. As to quaternary structure, homodimer. The cofactor is FAD.

The enzyme catalyses 4-hydroxybenzoate + NADPH + O2 + H(+) = 3,4-dihydroxybenzoate + NADP(+) + H2O. It functions in the pathway aromatic compound metabolism; benzoate degradation via hydroxylation; 3,4-dihydroxybenzoate from benzoate: step 2/2. Catalyzes the incorporation of an atom of dioxygen into p-hydroxybenzoate (p-OHB) to form 3,4-dihydroxybenzoate (3,4DOHB). The reaction occurs in two parts: reduction of the flavin adenine dinucleotide (FAD) in the enzyme by reduced nicotinamide adenine dinucleotide phosphate (NADPH) in response to binding p-hydroxybenzoate to the enzyme and oxidation of reduced FAD with oxygen to form a hydroperoxide, which then oxygenates p-hydroxybenzoate. The sequence is that of p-hydroxybenzoate hydroxylase (pobA) from Acinetobacter baylyi (strain ATCC 33305 / BD413 / ADP1).